The chain runs to 453 residues: Serine/threonine-protein phosphatase 2A regulatory subunit B'' subunit gamma (453 aa).

EF-hand domains follow at residues 273-308 and 341-376; these read PSALRVYGQYLNLDKDHNGMLSKEELSRYGTATMTN and KEPAALQYIFKLLDIENKGYLNVFSLNYFFRAIQEL. Ca(2+) is bound by residues D286, D288, N290, M292, and E297.

Interacts with MCM3AP/GANP, PPP5C, and the phosphatase 2A core enzyme composed of the PPP2CA catalytic subunit and the constant regulatory subunit PPP2R1A. Finds in a complex with ABCB1, TFPI2 and PPP2R3C; leading to the dephosphorylation of ABCB1.

It is found in the nucleus. Its subcellular location is the cytoplasm. Its function is as follows. May regulate MCM3AP phosphorylation through phosphatase recruitment. May act as a negative regulator of ABCB1 expression and function through the dephosphorylation of ABCB1 by TFPI2/PPP2R3C complex. May play a role in the activation-induced cell death of B-cells. This chain is Serine/threonine-protein phosphatase 2A regulatory subunit B'' subunit gamma (PPP2R3C), found in Bos taurus (Bovine).